We begin with the raw amino-acid sequence, 157 residues long: SsrA-binding protein (157 aa).

The protein belongs to the SmpB family.

Its subcellular location is the cytoplasm. Required for rescue of stalled ribosomes mediated by trans-translation. Binds to transfer-messenger RNA (tmRNA), required for stable association of tmRNA with ribosomes. tmRNA and SmpB together mimic tRNA shape, replacing the anticodon stem-loop with SmpB. tmRNA is encoded by the ssrA gene; the 2 termini fold to resemble tRNA(Ala) and it encodes a 'tag peptide', a short internal open reading frame. During trans-translation Ala-aminoacylated tmRNA acts like a tRNA, entering the A-site of stalled ribosomes, displacing the stalled mRNA. The ribosome then switches to translate the ORF on the tmRNA; the nascent peptide is terminated with the 'tag peptide' encoded by the tmRNA and targeted for degradation. The ribosome is freed to recommence translation, which seems to be the essential function of trans-translation. The protein is SsrA-binding protein of Syntrophomonas wolfei subsp. wolfei (strain DSM 2245B / Goettingen).